The primary structure comprises 406 residues: Imidazolonepropionase (406 aa).

The Fe(3+) site is built by His67 and His69. Zn(2+) contacts are provided by His67 and His69. The 4-imidazolone-5-propanoate site is built by Arg76, Tyr139, and His172. N-formimidoyl-L-glutamate is bound at residue Tyr139. Position 237 (His237) interacts with Fe(3+). His237 is a Zn(2+) binding site. Gln240 contacts 4-imidazolone-5-propanoate. Fe(3+) is bound at residue Asp312. Zn(2+) is bound at residue Asp312. N-formimidoyl-L-glutamate contacts are provided by Asn314 and Gly316. Thr317 contacts 4-imidazolone-5-propanoate.

Belongs to the metallo-dependent hydrolases superfamily. HutI family. The cofactor is Zn(2+). Fe(3+) is required as a cofactor.

Its subcellular location is the cytoplasm. It carries out the reaction 4-imidazolone-5-propanoate + H2O = N-formimidoyl-L-glutamate. Its pathway is amino-acid degradation; L-histidine degradation into L-glutamate; N-formimidoyl-L-glutamate from L-histidine: step 3/3. Its function is as follows. Catalyzes the hydrolytic cleavage of the carbon-nitrogen bond in imidazolone-5-propanoate to yield N-formimidoyl-L-glutamate. It is the third step in the universal histidine degradation pathway. This chain is Imidazolonepropionase, found in Paraburkholderia phymatum (strain DSM 17167 / CIP 108236 / LMG 21445 / STM815) (Burkholderia phymatum).